The chain runs to 62 residues: UPF0370 protein ESA_00777 (62 aa).

Residues 4–24 (LGKYWWVLVLVFLLGVLLNVI) form a helical membrane-spanning segment. The segment covering 36-51 (MDNRPELPPHRDFNDK) has biased composition (basic and acidic residues). Residues 36 to 62 (MDNRPELPPHRDFNDKWDDEDDWPKKK) are disordered. The span at 52-62 (WDDEDDWPKKK) shows a compositional bias: acidic residues.

It belongs to the UPF0370 family.

The protein resides in the cell membrane. The chain is UPF0370 protein ESA_00777 from Cronobacter sakazakii (strain ATCC BAA-894) (Enterobacter sakazakii).